A 311-amino-acid chain; its full sequence is Probable manganese-dependent inorganic pyrophosphatase (311 aa).

6 residues coordinate Mn(2+): His9, Asp13, Asp15, Asp75, His97, and Asp149.

The protein belongs to the PPase class C family. It depends on Mn(2+) as a cofactor.

Its subcellular location is the cytoplasm. The enzyme catalyses diphosphate + H2O = 2 phosphate + H(+). This chain is Probable manganese-dependent inorganic pyrophosphatase, found in Lactobacillus delbrueckii subsp. bulgaricus (strain ATCC BAA-365 / Lb-18).